A 362-amino-acid polypeptide reads, in one-letter code: Fructose-bisphosphate aldolase (362 aa).

Position 65 (serine 65) interacts with D-glyceraldehyde 3-phosphate. Aspartate 112 (proton donor) is an active-site residue. Zn(2+)-binding residues include histidine 113, aspartate 147, glutamate 177, and histidine 229. Residue glycine 230 coordinates dihydroxyacetone phosphate. Position 268 (histidine 268) interacts with Zn(2+). Dihydroxyacetone phosphate contacts are provided by residues 269–271 (GGS) and 290–293 (NVDT).

The protein belongs to the class II fructose-bisphosphate aldolase family. Homodimer. Zn(2+) serves as cofactor.

It catalyses the reaction beta-D-fructose 1,6-bisphosphate = D-glyceraldehyde 3-phosphate + dihydroxyacetone phosphate. It participates in carbohydrate degradation; glycolysis; D-glyceraldehyde 3-phosphate and glycerone phosphate from D-glucose: step 4/4. In terms of biological role, catalyzes the aldol condensation of dihydroxyacetone phosphate (DHAP or glycerone-phosphate) with glyceraldehyde 3-phosphate (G3P) to form fructose 1,6-bisphosphate (FBP) in gluconeogenesis and the reverse reaction in glycolysis. This Aspergillus oryzae (strain ATCC 42149 / RIB 40) (Yellow koji mold) protein is Fructose-bisphosphate aldolase (fbaA).